Reading from the N-terminus, the 508-residue chain is CUGBP Elav-like family member 2 (508 aa).

Necessary for RNA-binding, TNNT2 exon 5 and NMDA R1 exon 21 inclusion stretches follow at residues 1–283 (MRCP…LQNL) and 357–508 (LAGM…SKPY). RRM domains lie at 40–123 (IKMF…PADS), 132–212 (RKLF…FADT), and 423–501 (ANLF…LKRS).

It belongs to the CELF/BRUNOL family. As to quaternary structure, interacts with A1CF. As to expression, expressed in frontal cortex. Isoform 1 is expressed in brain and lung. Isoform 2 is expressed in heart, brain, placenta, lung, liver, kidney, skeletal muscle and pancreas. Isoform 4 is expressed in heart, lung, skeletal muscle, kidney and pancreas.

It localises to the nucleus. Its subcellular location is the cytoplasm. In terms of biological role, RNA-binding protein implicated in the regulation of several post-transcriptional events. Involved in pre-mRNA alternative splicing, mRNA translation and stability. Mediates exon inclusion and/or exclusion in pre-mRNA that are subject to tissue-specific and developmentally regulated alternative splicing. Specifically activates exon 5 inclusion of TNNT2 in embryonic, but not adult, skeletal muscle. Activates TNNT2 exon 5 inclusion by antagonizing the repressive effect of PTB. Acts both as an activator and as a repressor of a pair of coregulated exons: promotes inclusion of the smooth muscle (SM) exon but exclusion of the non-muscle (NM) exon in actinin pre-mRNAs. Promotes inclusion of exonS 21 and exclusion of exon 5 of the NMDA receptor R1 pre-mRNA. Involved in the apoB RNA editing activity. Increases COX2 mRNA stability and inhibits COX2 mRNA translation in epithelial cells after radiation injury. Modulates the cellular apoptosis program by regulating COX2-mediated prostaglandin E2 (PGE2) expression. Binds to (CUG)n triplet repeats in the 3'-UTR of transcripts such as DMPK. Binds to the muscle-specific splicing enhancer (MSE) intronic sites flanking the TNNT2 alternative exon 5. Binds preferentially to UG-rich sequences, in particular UG repeat and UGUU motifs. Binds to apoB mRNA, specifically to AU-rich sequences located immediately upstream of the edited cytidine. Binds AU-rich sequences in the 3'-UTR of COX2 mRNA. Binds to an intronic RNA element responsible for the silencing of exon 21 splicing. Binds to (CUG)n repeats. May be a specific regulator of miRNA biogenesis. Binds to primary microRNA pri-MIR140 and, with CELF1, negatively regulates the processing to mature miRNA. The chain is CUGBP Elav-like family member 2 (CELF2) from Homo sapiens (Human).